Reading from the N-terminus, the 524-residue chain is uncharacterized protein (524 aa).

Residues 1-65 (MSDPFFTRPE…IDEENEDTYE (65 aa)) are disordered. Residues 21–32 (SKREKENQKLER) are compositionally biased toward basic and acidic residues. Over residues 51–64 (GFEDEIDEENEDTY) the composition is skewed to acidic residues. 7 WD repeats span residues 131 to 176 (IETA…DTEN), 206 to 245 (DHVKEITCLAISNDGRWIVTGGLDHRIVIRDSVTLEPQHC), 248 to 287 (HHRDAVMGLAMRRGTNEMFSCSADRSIKVWSLDQMSYIET), 290 to 329 (GHQDVIFGVDALARERCVSVGGRDRTSRLWKIVEESQLVF), 342 to 380 (YMEGSVDCVAMIDEDHFVTGSDNGVIALWSVQRKKPLFT), 409 to 448 (PQPRWITSLAAIPYSNLFASGSWDGNIRLWKIAEGLRSFE), and 457 to 503 (SVYG…PNSG).

It localises to the nucleus. This is an uncharacterized protein from Schizosaccharomyces pombe (strain 972 / ATCC 24843) (Fission yeast).